The primary structure comprises 465 residues: Kynureninase (465 aa).

Residues Leu-133, Thr-134, 161-164 (FPSD), Ser-217, Asp-246, His-249, and Tyr-271 each bind pyridoxal 5'-phosphate. Position 272 is an N6-(pyridoxal phosphate)lysine (Lys-272). Pyridoxal 5'-phosphate-binding residues include Trp-302 and Asn-330.

This sequence belongs to the kynureninase family. As to quaternary structure, homodimer. Pyridoxal 5'-phosphate is required as a cofactor.

It is found in the cytoplasm. The catalysed reaction is L-kynurenine + H2O = anthranilate + L-alanine + H(+). It catalyses the reaction 3-hydroxy-L-kynurenine + H2O = 3-hydroxyanthranilate + L-alanine + H(+). It participates in amino-acid degradation; L-kynurenine degradation; L-alanine and anthranilate from L-kynurenine: step 1/1. The protein operates within cofactor biosynthesis; NAD(+) biosynthesis; quinolinate from L-kynurenine: step 2/3. Catalyzes the cleavage of L-kynurenine (L-Kyn) and L-3-hydroxykynurenine (L-3OHKyn) into anthranilic acid (AA) and 3-hydroxyanthranilic acid (3-OHAA), respectively. The polypeptide is Kynureninase (Nematostella vectensis (Starlet sea anemone)).